The primary structure comprises 176 residues: Large ribosomal subunit protein uL16 (176 aa).

This sequence belongs to the universal ribosomal protein uL16 family.

This Picrophilus torridus (strain ATCC 700027 / DSM 9790 / JCM 10055 / NBRC 100828 / KAW 2/3) protein is Large ribosomal subunit protein uL16.